A 61-amino-acid polypeptide reads, in one-letter code: UPF0434 protein Bpet2671 (61 aa).

The protein belongs to the UPF0434 family.

The sequence is that of UPF0434 protein Bpet2671 from Bordetella petrii (strain ATCC BAA-461 / DSM 12804 / CCUG 43448).